The following is a 284-amino-acid chain: NAD kinase (284 aa).

The active-site Proton acceptor is Asp-70. NAD(+) contacts are provided by residues 70-71, 139-140, Lys-167, Asp-169, Leu-177, 180-185, and Gln-236; these read DG, NE, and TAYNLS.

Belongs to the NAD kinase family. A divalent metal cation is required as a cofactor.

The protein localises to the cytoplasm. The enzyme catalyses NAD(+) + ATP = ADP + NADP(+) + H(+). In terms of biological role, involved in the regulation of the intracellular balance of NAD and NADP, and is a key enzyme in the biosynthesis of NADP. Catalyzes specifically the phosphorylation on 2'-hydroxyl of the adenosine moiety of NAD to yield NADP. This is NAD kinase from Helicobacter pylori (strain HPAG1).